The sequence spans 397 residues: Putative protein FAM47D (397 aa).

The protein belongs to the FAM47 family.

The sequence is that of Putative protein FAM47D (FAM47DP) from Homo sapiens (Human).